A 473-amino-acid chain; its full sequence is 3-isopropylmalate dehydratase large subunit (473 aa).

[4Fe-4S] cluster is bound by residues C351, C414, and C417.

It belongs to the aconitase/IPM isomerase family. LeuC type 1 subfamily. Heterodimer of LeuC and LeuD. [4Fe-4S] cluster is required as a cofactor.

The catalysed reaction is (2R,3S)-3-isopropylmalate = (2S)-2-isopropylmalate. The protein operates within amino-acid biosynthesis; L-leucine biosynthesis; L-leucine from 3-methyl-2-oxobutanoate: step 2/4. Functionally, catalyzes the isomerization between 2-isopropylmalate and 3-isopropylmalate, via the formation of 2-isopropylmaleate. This Polaromonas sp. (strain JS666 / ATCC BAA-500) protein is 3-isopropylmalate dehydratase large subunit.